We begin with the raw amino-acid sequence, 140 residues long: Large ribosomal subunit protein uL11 (140 aa).

The protein belongs to the universal ribosomal protein uL11 family. Part of the ribosomal stalk of the 50S ribosomal subunit. Interacts with L10 and the large rRNA to form the base of the stalk. L10 forms an elongated spine to which L12 dimers bind in a sequential fashion forming a multimeric L10(L12)X complex. In terms of processing, one or more lysine residues are methylated.

Its function is as follows. Forms part of the ribosomal stalk which helps the ribosome interact with GTP-bound translation factors. This is Large ribosomal subunit protein uL11 from Geotalea daltonii (strain DSM 22248 / JCM 15807 / FRC-32) (Geobacter daltonii).